The primary structure comprises 93 residues: Large ribosomal subunit protein uL23 (93 aa).

This sequence belongs to the universal ribosomal protein uL23 family. As to quaternary structure, part of the 50S ribosomal subunit. Contacts protein L29, and trigger factor when it is bound to the ribosome.

Functionally, one of the early assembly proteins it binds 23S rRNA. One of the proteins that surrounds the polypeptide exit tunnel on the outside of the ribosome. Forms the main docking site for trigger factor binding to the ribosome. The chain is Large ribosomal subunit protein uL23 from Campylobacter jejuni subsp. jejuni serotype O:6 (strain 81116 / NCTC 11828).